Consider the following 156-residue polypeptide: Ribosomal RNA large subunit methyltransferase H (156 aa).

Residues L73, G104, and 123 to 128 (ISSLTL) each bind S-adenosyl-L-methionine.

Belongs to the RNA methyltransferase RlmH family. Homodimer.

The protein resides in the cytoplasm. The catalysed reaction is pseudouridine(1915) in 23S rRNA + S-adenosyl-L-methionine = N(3)-methylpseudouridine(1915) in 23S rRNA + S-adenosyl-L-homocysteine + H(+). Its function is as follows. Specifically methylates the pseudouridine at position 1915 (m3Psi1915) in 23S rRNA. This is Ribosomal RNA large subunit methyltransferase H from Herminiimonas arsenicoxydans.